The chain runs to 727 residues: Fatty acid oxidation complex subunit alpha (727 aa).

The tract at residues 16–205 is enoyl-CoA hydratase; sequence NQTASVFSFD…RLGLVDDAVP (190 aa). The segment at 321–727 is 3-hydroxyacyl-CoA dehydrogenase; sequence AKIKHVGILG…MAEQNKSFYP (407 aa).

It in the N-terminal section; belongs to the enoyl-CoA hydratase/isomerase family. The protein in the central section; belongs to the 3-hydroxyacyl-CoA dehydrogenase family. Heterotetramer of two alpha chains (FadJ) and two beta chains (FadI).

Its subcellular location is the cytoplasm. The enzyme catalyses a (3S)-3-hydroxyacyl-CoA = a (2E)-enoyl-CoA + H2O. It catalyses the reaction a 4-saturated-(3S)-3-hydroxyacyl-CoA = a (3E)-enoyl-CoA + H2O. It carries out the reaction a (3S)-3-hydroxyacyl-CoA + NAD(+) = a 3-oxoacyl-CoA + NADH + H(+). The catalysed reaction is (3S)-3-hydroxybutanoyl-CoA = (3R)-3-hydroxybutanoyl-CoA. The protein operates within lipid metabolism; fatty acid beta-oxidation. Functionally, catalyzes the formation of a hydroxyacyl-CoA by addition of water on enoyl-CoA. Also exhibits 3-hydroxyacyl-CoA epimerase and 3-hydroxyacyl-CoA dehydrogenase activities. The chain is Fatty acid oxidation complex subunit alpha from Photorhabdus laumondii subsp. laumondii (strain DSM 15139 / CIP 105565 / TT01) (Photorhabdus luminescens subsp. laumondii).